A 393-amino-acid chain; its full sequence is Putative F-box/kelch-repeat protein At1g32430 (393 aa).

An F-box domain is found at 1-47; it reads MANKEKLPWDLEEEILSRVPPTSLDRFKTVCKRWNALFNDKTFINNH. Kelch repeat units follow at residues 151 to 199 and 308 to 357; these read YMKD…NLSV and WIYV…QVQF.

The sequence is that of Putative F-box/kelch-repeat protein At1g32430 from Arabidopsis thaliana (Mouse-ear cress).